A 580-amino-acid chain; its full sequence is Aspartate--tRNA ligase (580 aa).

Residue glutamate 173 coordinates L-aspartate. The segment at 195-198 (QIYK) is aspartate. Arginine 217 serves as a coordination point for L-aspartate. Residues 217 to 219 (RDE) and glutamine 226 contribute to the ATP site. Histidine 443 lines the L-aspartate pocket. An ATP-binding site is contributed by glutamate 477. Residue arginine 484 participates in L-aspartate binding. 529-532 (GIER) contributes to the ATP binding site.

This sequence belongs to the class-II aminoacyl-tRNA synthetase family. Type 1 subfamily. Homodimer.

The protein localises to the cytoplasm. It catalyses the reaction tRNA(Asp) + L-aspartate + ATP = L-aspartyl-tRNA(Asp) + AMP + diphosphate. Its function is as follows. Catalyzes the attachment of L-aspartate to tRNA(Asp) in a two-step reaction: L-aspartate is first activated by ATP to form Asp-AMP and then transferred to the acceptor end of tRNA(Asp). This is Aspartate--tRNA ligase from Malacoplasma penetrans (strain HF-2) (Mycoplasma penetrans).